Consider the following 596-residue polypeptide: Chaperone protein DnaK (596 aa).

Residue threonine 180 is modified to Phosphothreonine; by autocatalysis.

This sequence belongs to the heat shock protein 70 family.

Functionally, acts as a chaperone. This chain is Chaperone protein DnaK, found in Thermosipho melanesiensis (strain DSM 12029 / CIP 104789 / BI429).